Here is a 462-residue protein sequence, read N- to C-terminus: Fumarate hydratase class II (462 aa).

Residues 98–100 (SGT), Arg126, 129–132 (HPND), 139–141 (SSN), and Thr187 each bind substrate. The segment at 120-141 (GTRGKGRKVHPNDHVNKGQSSN) is disordered. The active-site Proton donor/acceptor is the His188. Ser318 is an active-site residue. Substrate contacts are provided by residues Ser319 and 324-326 (KVN).

It belongs to the class-II fumarase/aspartase family. Fumarase subfamily. As to quaternary structure, homotetramer.

The protein localises to the cytoplasm. It catalyses the reaction (S)-malate = fumarate + H2O. The protein operates within carbohydrate metabolism; tricarboxylic acid cycle; (S)-malate from fumarate: step 1/1. In terms of biological role, involved in the TCA cycle. Catalyzes the stereospecific interconversion of fumarate to L-malate. This is Fumarate hydratase class II from Nitrosomonas europaea (strain ATCC 19718 / CIP 103999 / KCTC 2705 / NBRC 14298).